The sequence spans 465 residues: Na(+)-translocating NADH-quinone reductase subunit A (465 aa).

The protein belongs to the NqrA family. Composed of six subunits; NqrA, NqrB, NqrC, NqrD, NqrE and NqrF.

The catalysed reaction is a ubiquinone + n Na(+)(in) + NADH + H(+) = a ubiquinol + n Na(+)(out) + NAD(+). NQR complex catalyzes the reduction of ubiquinone-1 to ubiquinol by two successive reactions, coupled with the transport of Na(+) ions from the cytoplasm to the periplasm. NqrA to NqrE are probably involved in the second step, the conversion of ubisemiquinone to ubiquinol. This is Na(+)-translocating NADH-quinone reductase subunit A from Chlamydia muridarum (strain MoPn / Nigg).